A 271-amino-acid polypeptide reads, in one-letter code: 3-methyl-2-oxobutanoate hydroxymethyltransferase (271 aa).

The Mg(2+) site is built by aspartate 51 and aspartate 90. Residues 51 to 52 (DS), aspartate 90, and lysine 118 contribute to the 3-methyl-2-oxobutanoate site. Glutamate 120 is a Mg(2+) binding site. Glutamate 186 serves as the catalytic Proton acceptor.

It belongs to the PanB family. As to quaternary structure, homodecamer; pentamer of dimers. It depends on Mg(2+) as a cofactor.

The protein resides in the cytoplasm. The enzyme catalyses 3-methyl-2-oxobutanoate + (6R)-5,10-methylene-5,6,7,8-tetrahydrofolate + H2O = 2-dehydropantoate + (6S)-5,6,7,8-tetrahydrofolate. It functions in the pathway cofactor biosynthesis; (R)-pantothenate biosynthesis; (R)-pantoate from 3-methyl-2-oxobutanoate: step 1/2. In terms of biological role, catalyzes the reversible reaction in which hydroxymethyl group from 5,10-methylenetetrahydrofolate is transferred onto alpha-ketoisovalerate to form ketopantoate. This chain is 3-methyl-2-oxobutanoate hydroxymethyltransferase, found in Xanthomonas oryzae pv. oryzae (strain MAFF 311018).